The sequence spans 391 residues: 3-ketoacyl-CoA thiolase (391 aa).

The active-site Acyl-thioester intermediate is the cysteine 95. Catalysis depends on proton acceptor residues histidine 347 and cysteine 377.

Belongs to the thiolase-like superfamily. Thiolase family. In terms of assembly, heterotetramer of two alpha chains (FadB) and two beta chains (FadA).

The protein localises to the cytoplasm. The enzyme catalyses an acyl-CoA + acetyl-CoA = a 3-oxoacyl-CoA + CoA. It participates in lipid metabolism; fatty acid beta-oxidation. In terms of biological role, catalyzes the final step of fatty acid oxidation in which acetyl-CoA is released and the CoA ester of a fatty acid two carbons shorter is formed. The chain is 3-ketoacyl-CoA thiolase from Pseudomonas syringae pv. syringae (strain B728a).